Here is a 124-residue protein sequence, read N- to C-terminus: Holo-[acyl-carrier-protein] synthase (124 aa).

Mg(2+)-binding residues include Asp-8 and Glu-56.

Belongs to the P-Pant transferase superfamily. AcpS family. Mg(2+) is required as a cofactor.

The protein resides in the cytoplasm. The enzyme catalyses apo-[ACP] + CoA = holo-[ACP] + adenosine 3',5'-bisphosphate + H(+). In terms of biological role, transfers the 4'-phosphopantetheine moiety from coenzyme A to a Ser of acyl-carrier-protein. The polypeptide is Holo-[acyl-carrier-protein] synthase (Maridesulfovibrio salexigens (strain ATCC 14822 / DSM 2638 / NCIMB 8403 / VKM B-1763) (Desulfovibrio salexigens)).